Reading from the N-terminus, the 293-residue chain is Ribosomal protein L11 methyltransferase (293 aa).

S-adenosyl-L-methionine is bound by residues threonine 145, glycine 166, aspartate 188, and asparagine 230.

Belongs to the methyltransferase superfamily. PrmA family.

The protein localises to the cytoplasm. The catalysed reaction is L-lysyl-[protein] + 3 S-adenosyl-L-methionine = N(6),N(6),N(6)-trimethyl-L-lysyl-[protein] + 3 S-adenosyl-L-homocysteine + 3 H(+). Its function is as follows. Methylates ribosomal protein L11. This is Ribosomal protein L11 methyltransferase from Shewanella halifaxensis (strain HAW-EB4).